Consider the following 337-residue polypeptide: Ribosomal RNA small subunit methyltransferase C (337 aa).

The protein belongs to the methyltransferase superfamily. RsmC family. In terms of assembly, monomer.

Its subcellular location is the cytoplasm. The enzyme catalyses guanosine(1207) in 16S rRNA + S-adenosyl-L-methionine = N(2)-methylguanosine(1207) in 16S rRNA + S-adenosyl-L-homocysteine + H(+). In terms of biological role, specifically methylates the guanine in position 1207 of 16S rRNA in the 30S particle. This Acinetobacter baumannii (strain ATCC 17978 / DSM 105126 / CIP 53.77 / LMG 1025 / NCDC KC755 / 5377) protein is Ribosomal RNA small subunit methyltransferase C.